Reading from the N-terminus, the 145-residue chain is D-aminoacyl-tRNA deacylase (145 aa).

A Gly-cisPro motif, important for rejection of L-amino acids motif is present at residues 137-138 (GP).

This sequence belongs to the DTD family. In terms of assembly, homodimer.

It is found in the cytoplasm. It carries out the reaction glycyl-tRNA(Ala) + H2O = tRNA(Ala) + glycine + H(+). It catalyses the reaction a D-aminoacyl-tRNA + H2O = a tRNA + a D-alpha-amino acid + H(+). Functionally, an aminoacyl-tRNA editing enzyme that deacylates mischarged D-aminoacyl-tRNAs. Also deacylates mischarged glycyl-tRNA(Ala), protecting cells against glycine mischarging by AlaRS. Acts via tRNA-based rather than protein-based catalysis; rejects L-amino acids rather than detecting D-amino acids in the active site. By recycling D-aminoacyl-tRNA to D-amino acids and free tRNA molecules, this enzyme counteracts the toxicity associated with the formation of D-aminoacyl-tRNA entities in vivo and helps enforce protein L-homochirality. This is D-aminoacyl-tRNA deacylase from Cronobacter sakazakii (strain ATCC BAA-894) (Enterobacter sakazakii).